Here is a 282-residue protein sequence, read N- to C-terminus: Putative 4-diphosphocytidyl-2-C-methyl-D-erythritol kinase (282 aa).

Residue Lys9 is part of the active site. 93 to 103 (PVSAGLAGGSA) lines the ATP pocket. Asp135 is an active-site residue.

The protein belongs to the GHMP kinase family. IspE subfamily.

It catalyses the reaction 4-CDP-2-C-methyl-D-erythritol + ATP = 4-CDP-2-C-methyl-D-erythritol 2-phosphate + ADP + H(+). Its function is as follows. Catalyzes the phosphorylation of the position 2 hydroxy group of 4-diphosphocytidyl-2C-methyl-D-erythritol. This chain is Putative 4-diphosphocytidyl-2-C-methyl-D-erythritol kinase, found in Staphylococcus haemolyticus (strain JCSC1435).